A 580-amino-acid chain; its full sequence is Ran GTPase-activating protein 1 (580 aa).

7 LRR repeats span residues 48 to 71 (YEGL…AIAE), 111 to 134 (GAQL…GFEA), 141 to 168 (CFTL…ALTE), 207 to 230 (IGTL…ALAE), 235 to 258 (NSLL…AMAE), 292 to 315 (LHKL…SLAE), and 320 to 343 (KSDL…QVQE). Residues 356-429 (SLSDDEDEDD…PPKLPVDAST (74 aa)) are disordered. The span at 358–399 (SDDEDEDDDDDDEDDDDDEDDENDDEEVEEEEEEVEEEEGGD) shows a compositional bias: acidic residues.

Belongs to the RNA1 family. As to quaternary structure, homodimer. Identified in a complex with RANBP2 and the ubiquitin-conjugating enzyme E2 (UBE2I). In terms of processing, may be sumoylated.

The protein resides in the cytoplasm. Its subcellular location is the nucleus. It is found in the nucleoplasm. It localises to the nucleus envelope. The protein localises to the chromosome. The protein resides in the centromere. Its subcellular location is the kinetochore. It is found in the cytoskeleton. It localises to the spindle. Functionally, GTPase activator for RAN, converting it to the GDP-bound state. Converts cytoplasmic GTP-bound RAN to GDP-bound RAN, which is required for RAN-mediated nuclear import and export. In Xenopus laevis (African clawed frog), this protein is Ran GTPase-activating protein 1 (rangap1).